The primary structure comprises 464 residues: Heterogeneous nuclear ribonucleoprotein K (464 aa).

Met1 is subject to N-acetylmethionine. Residues 1-37 (METEQPEETFPNTETNGEFGKRPAEDMEEEQAFKRSR) form a disordered region. The interval 1–276 (METEQPEETF…GRGGRPMPPS (276 aa)) is necessary for interaction with DDX1. Positions 19–37 (FGKRPAEDMEEEQAFKRSR) are enriched in basic and acidic residues. The residue at position 34 (Lys34) is an N6-acetyllysine; alternate. Residue Lys34 forms a Glycyl lysine isopeptide (Lys-Gly) (interchain with G-Cter in SUMO1); alternate linkage. A Glycyl lysine isopeptide (Lys-Gly) (interchain with G-Cter in SUMO2); alternate cross-link involves residue Lys34. Ser36 carries the post-translational modification Phosphoserine. Thr39 carries the post-translational modification Phosphothreonine. A KH 1 domain is found at 42 to 104 (MVELRILLQS…ETIGEILKKI (63 aa)). Residues Lys52 and Lys60 each participate in a glycyl lysine isopeptide (Lys-Gly) (interchain with G-Cter in SUMO2) cross-link. Repeat copies occupy residues 54-76 (AGAVIGKGGKNIKALRTDYNASV) and 59-62 (GKGG). A 2 X 22 AA approximate repeats region spans residues 54–421 (AGAVIGKGGK…QIRHESGASI (368 aa)). The interval 59–407 (GKGGKNIKAL…LAGSIIGKGG (349 aa)) is 5 X 4 AA repeats of G-X-G-G. Phosphoserine occurs at positions 75 and 116. In terms of domain architecture, KH 2 spans 144-209 (DCELRLLIHQ…DRVVECIKII (66 aa)). A Glycyl lysine isopeptide (Lys-Gly) (interchain with G-Cter in SUMO1); alternate cross-link involves residue Lys163. Lys163 participates in a covalent cross-link: Glycyl lysine isopeptide (Lys-Gly) (interchain with G-Cter in SUMO2); alternate. At Lys198 the chain carries N6-acetyllysine. The segment at 209–337 (ILDLISESPI…RPGDRYDGMV (129 aa)) is interaction with ZIK1. Phosphoserine is present on residues Ser214 and Ser216. Residue Lys219 forms a Glycyl lysine isopeptide (Lys-Gly) (interchain with G-Cter in SUMO2); alternate linkage. Lys219 carries the N6-succinyllysine; alternate modification. Residues 236-273 (YGGFTMMFDDRRGRPVGFPMRGRGGFDRMPPGRGGRPM) are RNA-binding RGG-box. 3 consecutive repeat copies span residues 245–250 (DRRGRP), 257–260 (GRGG), and 267–270 (GRGG). Positions 245-329 (DRRGRPVGFP…LMAYDRRGRP (85 aa)) are 2 X 6 AA approximate repeats. The tract at residues 250–329 (PVGFPMRGRG…LMAYDRRGRP (80 aa)) is disordered. A compositionally biased stretch (low complexity) spans 252–266 (GFPMRGRGGFDRMPP). The span at 276-285 (SRRDYDDMSP) shows a compositional bias: basic and acidic residues. Position 284 is a phosphoserine (Ser284). One copy of the 3-4 repeat lies at 295–298 (GRGG). Arg316 bears the Omega-N-methylarginine mark. The 2-2 repeat unit spans residues 324-329 (DRRGRP). Position 377 is an omega-N-methylarginine (Arg377). Ser379 bears the Phosphoserine mark. Position 380 is a phosphotyrosine (Tyr380). Positions 387–451 (IITTQVTIPK…DQIQNAQYLL (65 aa)) constitute a KH 3 domain. 2 repeat units span residues 399-421 (AGSIIGKGGQRIKQIRHESGASI) and 404-407 (GKGG). Lys405 carries the post-translational modification N6-acetyllysine; alternate. Residue Lys405 forms a Glycyl lysine isopeptide (Lys-Gly) (interchain with G-Cter in SUMO2); alternate linkage. The residue at position 420 (Ser420) is a Phosphoserine. A Glycyl lysine isopeptide (Lys-Gly) (interchain with G-Cter in SUMO1); alternate cross-link involves residue Lys422. Residue Lys422 forms a Glycyl lysine isopeptide (Lys-Gly) (interchain with G-Cter in SUMO2); alternate linkage. Lys422 is covalently cross-linked (Glycyl lysine isopeptide (Lys-Gly) (interchain with G-Cter in SUMO); alternate).

In terms of assembly, identified in the spliceosome C complex. Interacts with ANKRD28, RBM42 and ZIK1. Interacts with DDX1. Interacts with MDM2; this interaction leads to ubiquitination and proteasomal degradation. Interacts with p53/TP53. Interacts with BRDT. Interacts with IVNS1ABP. Interacts with PPIA/CYPA. Part of a transcription inhibitory ribonucleoprotein complex composed at least of the circular RNA circZNF827, ZNF827 and HNRNPL. Sumoylated by CBX4. Sumoylation is increased upon DNA damage, such as that produced by doxorubicin, etoposide, UV light and camptothecin, due to enhanced CBX4 phosphorylation by HIPK2 under these conditions. Post-translationally, ubiquitinated by MDM2. Doxorubicin treatment does not affect monoubiquitination, but slightly decreases HNRNPK poly-ubiquitination. In terms of processing, O-glycosylated (O-GlcNAcylated), in a cell cycle-dependent manner.

It localises to the cytoplasm. Its subcellular location is the nucleus. It is found in the nucleoplasm. The protein resides in the cell projection. The protein localises to the podosome. Functionally, one of the major pre-mRNA-binding proteins. Binds tenaciously to poly(C) sequences. Likely to play a role in the nuclear metabolism of hnRNAs, particularly for pre-mRNAs that contain cytidine-rich sequences. Can also bind poly(C) single-stranded DNA. Plays an important role in p53/TP53 response to DNA damage, acting at the level of both transcription activation and repression. When sumoylated, acts as a transcriptional coactivator of p53/TP53, playing a role in p21/CDKN1A and 14-3-3 sigma/SFN induction. As far as transcription repression is concerned, acts by interacting with long intergenic RNA p21 (lincRNA-p21), a non-coding RNA induced by p53/TP53. This interaction is necessary for the induction of apoptosis, but not cell cycle arrest. As part of a ribonucleoprotein complex composed at least of ZNF827, HNRNPL and the circular RNA circZNF827 that nucleates the complex on chromatin, may negatively regulate the transcription of genes involved in neuronal differentiation. This Bos taurus (Bovine) protein is Heterogeneous nuclear ribonucleoprotein K (HNRNPK).